The following is a 714-amino-acid chain: Fatty acid oxidation complex subunit alpha (714 aa).

The segment at 1-190 (MEMASAFTLN…KLGLVDDVVP (190 aa)) is enoyl-CoA hydratase. A 3-hydroxyacyl-CoA dehydrogenase region spans residues 306-714 (APLNSVGILG…FWKTTATDLQ (409 aa)).

It in the N-terminal section; belongs to the enoyl-CoA hydratase/isomerase family. In the central section; belongs to the 3-hydroxyacyl-CoA dehydrogenase family. As to quaternary structure, heterotetramer of two alpha chains (FadJ) and two beta chains (FadI).

Its subcellular location is the cytoplasm. The catalysed reaction is a (3S)-3-hydroxyacyl-CoA = a (2E)-enoyl-CoA + H2O. It carries out the reaction a 4-saturated-(3S)-3-hydroxyacyl-CoA = a (3E)-enoyl-CoA + H2O. The enzyme catalyses a (3S)-3-hydroxyacyl-CoA + NAD(+) = a 3-oxoacyl-CoA + NADH + H(+). It catalyses the reaction (3S)-3-hydroxybutanoyl-CoA = (3R)-3-hydroxybutanoyl-CoA. It participates in lipid metabolism; fatty acid beta-oxidation. Functionally, catalyzes the formation of a hydroxyacyl-CoA by addition of water on enoyl-CoA. Also exhibits 3-hydroxyacyl-CoA epimerase and 3-hydroxyacyl-CoA dehydrogenase activities. This is Fatty acid oxidation complex subunit alpha from Escherichia coli O9:H4 (strain HS).